A 476-amino-acid polypeptide reads, in one-letter code: Glutamate--tRNA ligase (476 aa).

Positions 9–19 (PSPTGLFHIGT) match the 'HIGH' region motif. Positions 248 to 252 (KLSKR) match the 'KMSKS' region motif. ATP is bound at residue Lys251.

The protein belongs to the class-I aminoacyl-tRNA synthetase family. Glutamate--tRNA ligase type 1 subfamily. In terms of assembly, monomer.

It is found in the cytoplasm. It catalyses the reaction tRNA(Glu) + L-glutamate + ATP = L-glutamyl-tRNA(Glu) + AMP + diphosphate. Its function is as follows. Catalyzes the attachment of glutamate to tRNA(Glu) in a two-step reaction: glutamate is first activated by ATP to form Glu-AMP and then transferred to the acceptor end of tRNA(Glu). The polypeptide is Glutamate--tRNA ligase (Prochlorococcus marinus (strain MIT 9301)).